The following is a 702-amino-acid chain: Ribosomal RNA large subunit methyltransferase K/L (702 aa).

The THUMP domain occupies 43-154; sequence LVYQSLMWSR…KETASIALDL (112 aa).

It belongs to the methyltransferase superfamily. RlmKL family.

Its subcellular location is the cytoplasm. It catalyses the reaction guanosine(2445) in 23S rRNA + S-adenosyl-L-methionine = N(2)-methylguanosine(2445) in 23S rRNA + S-adenosyl-L-homocysteine + H(+). The enzyme catalyses guanosine(2069) in 23S rRNA + S-adenosyl-L-methionine = N(2)-methylguanosine(2069) in 23S rRNA + S-adenosyl-L-homocysteine + H(+). Specifically methylates the guanine in position 2445 (m2G2445) and the guanine in position 2069 (m7G2069) of 23S rRNA. The polypeptide is Ribosomal RNA large subunit methyltransferase K/L (Escherichia coli (strain K12 / DH10B)).